Here is a 244-residue protein sequence, read N- to C-terminus: Glucosamine-6-phosphate deaminase (244 aa).

The active-site Proton acceptor; for enolization step is the Asp67. The active-site For ring-opening step is the Asn133. The Proton acceptor; for ring-opening step role is filled by His135. Residue Glu140 is the For ring-opening step of the active site.

Belongs to the glucosamine/galactosamine-6-phosphate isomerase family. NagB subfamily.

It catalyses the reaction alpha-D-glucosamine 6-phosphate + H2O = beta-D-fructose 6-phosphate + NH4(+). It functions in the pathway amino-sugar metabolism; N-acetylneuraminate degradation; D-fructose 6-phosphate from N-acetylneuraminate: step 5/5. In terms of biological role, catalyzes the reversible isomerization-deamination of glucosamine 6-phosphate (GlcN6P) to form fructose 6-phosphate (Fru6P) and ammonium ion. This Mycoplasma mycoides subsp. mycoides SC (strain CCUG 32753 / NCTC 10114 / PG1) protein is Glucosamine-6-phosphate deaminase.